The primary structure comprises 100 residues: Large ribosomal subunit protein uL23 (100 aa).

It belongs to the universal ribosomal protein uL23 family. Part of the 50S ribosomal subunit. Contacts protein L29, and trigger factor when it is bound to the ribosome.

In terms of biological role, one of the early assembly proteins it binds 23S rRNA. One of the proteins that surrounds the polypeptide exit tunnel on the outside of the ribosome. Forms the main docking site for trigger factor binding to the ribosome. This is Large ribosomal subunit protein uL23 from Acaryochloris marina (strain MBIC 11017).